The sequence spans 395 residues: NAD(P)H-quinone oxidoreductase subunit H, chloroplastic (395 aa).

Belongs to the complex I 49 kDa subunit family. NDH is composed of at least 16 different subunits, 5 of which are encoded in the nucleus.

It is found in the plastid. The protein localises to the chloroplast thylakoid membrane. It catalyses the reaction a plastoquinone + NADH + (n+1) H(+)(in) = a plastoquinol + NAD(+) + n H(+)(out). The enzyme catalyses a plastoquinone + NADPH + (n+1) H(+)(in) = a plastoquinol + NADP(+) + n H(+)(out). NDH shuttles electrons from NAD(P)H:plastoquinone, via FMN and iron-sulfur (Fe-S) centers, to quinones in the photosynthetic chain and possibly in a chloroplast respiratory chain. The immediate electron acceptor for the enzyme in this species is believed to be plastoquinone. Couples the redox reaction to proton translocation, and thus conserves the redox energy in a proton gradient. This chain is NAD(P)H-quinone oxidoreductase subunit H, chloroplastic, found in Dioscorea elephantipes (Elephant's foot yam).